A 412-amino-acid polypeptide reads, in one-letter code: Branched-chain alpha-ketoacid dehydrogenase kinase (412 aa).

The transit peptide at 1–30 (MILASVLRSGPGGGLPLRPLLGPALALRAR) directs the protein to the mitochondrion. Residue serine 31 is modified to Phosphoserine. Phosphoserine; by autocatalysis is present on serine 52. One can recognise a Histidine kinase domain in the interval 159–404 (LDDHKDVVTL…DVYLRLRHID (246 aa)). Residues lysine 192 and lysine 233 each carry the N6-acetyllysine modification. Asparagine 279 and aspartate 315 together coordinate ATP. Asparagine 279 contributes to the Mg(2+) binding site. Residues valine 328, aspartate 330, and phenylalanine 333 each coordinate K(+). The ATP site is built by threonine 334 and threonine 335. Phosphoserine occurs at positions 356 and 360. ATP contacts are provided by histidine 364, glycine 367, and leucine 370. Glycine 367 contributes to the K(+) binding site.

The protein belongs to the PDK/BCKDK protein kinase family. Homodimer. Homotetramer. Dimerizes through interaction of two opposing nucleotide-binding domains. Interacts with E2 component of the branched-chain alpha-ketoacid dehydrogenase (BCKDH) complex. Competes with BCKDK for binding to the E2 component; this interaction is modulated by branched-chain alpha-keto acids. At steady state, BCKDH holoenzyme contains BCKDK and BCKDHA is phosphorylated. In response to high levels of branched-chain alpha-keto acids, the inhibitory BCKDK is replaced by activating PPM1K leading to BCKDHA dephosphorylation and BCAA degradation. Post-translationally, autophosphorylated. Ubiquitous.

The protein resides in the mitochondrion matrix. It catalyses the reaction L-seryl-[3-methyl-2-oxobutanoate dehydrogenase] + ATP = O-phospho-L-seryl-[3-methyl-2-oxobutanoate dehydrogenase] + ADP + H(+). It carries out the reaction L-seryl-[protein] + ATP = O-phospho-L-seryl-[protein] + ADP + H(+). It participates in protein modification. With respect to regulation, allosterically inhibited by certain thiazoles and thiophenes: thiazoles increase interaction with DBT/BCKDH-E2, whereas thiophenes reduce this interaction. Inhibited by 3,6- dichlorobenzo[b]thiophene-2-carboxylic acid (BT2). The ATP binding is mediated by both potassium and magnesium ions. Its function is as follows. Serine/threonine-protein kinase component of macronutrients metabolism. Forms a functional kinase and phosphatase pair with PPM1K, serving as a metabolic regulatory node that coordinates branched-chain amino acids (BCAAs) with glucose and lipid metabolism via two distinct phosphoprotein targets: mitochondrial BCKDHA subunit of the branched-chain alpha-ketoacid dehydrogenase (BCKDH) complex and cytosolic ACLY, a lipogenic enzyme of Krebs cycle. Phosphorylates and inactivates mitochondrial BCKDH complex a multisubunit complex consisting of three multimeric components each involved in different steps of BCAA catabolism: E1 composed of BCKDHA and BCKDHB, E2 core composed of DBT monomers, and E3 composed of DLD monomers. Associates with the E2 component of BCKDH complex and phosphorylates BCKDHA on Ser-337, leading to conformational changes that interrupt substrate channeling between E1 and E2 and inactivates the BCKDH complex. Phosphorylates ACLY on Ser-455 in response to changes in cellular carbohydrate abundance such as occurs during fasting to feeding metabolic transition. Refeeding stimulates MLXIPL/ChREBP transcription factor, leading to increased BCKDK to PPM1K expression ratio, phosphorylation and activation of ACLY that ultimately results in the generation of malonyl-CoA and oxaloacetate immediate substrates of de novo lipogenesis and glucogenesis, respectively. Recognizes phosphosites having SxxE/D canonical motif. This is Branched-chain alpha-ketoacid dehydrogenase kinase from Homo sapiens (Human).